Consider the following 198-residue polypeptide: FMN-dependent NADH:quinone oxidoreductase (198 aa).

FMN contacts are provided by residues serine 9 and 95 to 98 (MYNF).

Belongs to the azoreductase type 1 family. In terms of assembly, homodimer. It depends on FMN as a cofactor.

It carries out the reaction 2 a quinone + NADH + H(+) = 2 a 1,4-benzosemiquinone + NAD(+). The enzyme catalyses N,N-dimethyl-1,4-phenylenediamine + anthranilate + 2 NAD(+) = 2-(4-dimethylaminophenyl)diazenylbenzoate + 2 NADH + 2 H(+). In terms of biological role, quinone reductase that provides resistance to thiol-specific stress caused by electrophilic quinones. Its function is as follows. Also exhibits azoreductase activity. Catalyzes the reductive cleavage of the azo bond in aromatic azo compounds to the corresponding amines. This chain is FMN-dependent NADH:quinone oxidoreductase, found in Alcanivorax borkumensis (strain ATCC 700651 / DSM 11573 / NCIMB 13689 / SK2).